A 318-amino-acid polypeptide reads, in one-letter code: NADH-ubiquinone oxidoreductase chain 1 (318 aa).

The next 8 helical transmembrane spans lie at 2–22 (FFIN…FLTL), 70–90 (MFIL…IPLP), 100–120 (LGVL…LWSG), 147–167 (AIIL…TLII), 171–191 (HMWL…STLA), 223–243 (FFLA…ILFF), 253–273 (ELYS…FLWI), and 294–314 (LPLT…TASI).

The protein belongs to the complex I subunit 1 family. In terms of assembly, core subunit of respiratory chain NADH dehydrogenase (Complex I) which is composed of 45 different subunits.

It localises to the mitochondrion inner membrane. The enzyme catalyses a ubiquinone + NADH + 5 H(+)(in) = a ubiquinol + NAD(+) + 4 H(+)(out). In terms of biological role, core subunit of the mitochondrial membrane respiratory chain NADH dehydrogenase (Complex I) which catalyzes electron transfer from NADH through the respiratory chain, using ubiquinone as an electron acceptor. Essential for the catalytic activity and assembly of complex I. This Canis lupus familiaris (Dog) protein is NADH-ubiquinone oxidoreductase chain 1 (MT-ND1).